A 418-amino-acid chain; its full sequence is Ankyrin repeat domain-containing protein 61 (418 aa).

ANK repeat units lie at residues 27–57 (ALHSKLYEAIMREDCTTIEVLLRNHPVNQPI), 75–104 (ESIIPIHLAAKYHKAQSLLCLLRHGADPEV), 132–161 (NRTHRILTDIQNSSITCLRILCAHGAQVNT), 167–196 (NKRSPLHLAIAYGCYPVLSILTQNGADVNA), 200–229 (ASMTPLHMAANMLNKEMMETLIAYGANVNC), 234–273 (TGNTPLKLAVCTASSKAGRLLGAGVSCIRLLLTHGAKVNA), 277–306 (KGQTAIHEACFGGREAIINLLLEFEANVNI), and 310–343 (NGESPIYMYLQRSCNVRDTALLARLLYHTYPLRM).

The chain is Ankyrin repeat domain-containing protein 61 (ANKRD61) from Homo sapiens (Human).